Consider the following 1172-residue polypeptide: Structural maintenance of chromosomes protein 2 (1172 aa).

Position 32-39 (32-39 (GLNGSGKS)) interacts with ATP. 2 coiled-coil regions span residues 172-204 (RMFE…EEIE) and 258-507 (SHIA…AYME). An SMC hinge domain is found at 520–640 (SKVKGLVAQL…CDTPESAKKV (121 aa)). Residues 676–941 (LLQIQKLNSL…INHLEKENDW (266 aa)) adopt a coiled-coil conformation.

It belongs to the SMC family. SMC2 subfamily. Forms a heterodimer with cut3/smc4. Component of the condensin complex, which contains the cut3 and cut14 heterodimer, and three non smc subunits that probably regulate the complex: cnd1, cnd2 and cnd3.

The protein resides in the nucleus. The protein localises to the cytoplasm. Its subcellular location is the chromosome. Central component of the condensin complex, a complex required for conversion of interphase chromatin into mitotic-like condense chromosomes. The condensin complex probably introduces positive supercoils into relaxed DNA in the presence of type I topoisomerases and converts nicked DNA into positive knotted forms in the presence of type II topoisomerases. The polypeptide is Structural maintenance of chromosomes protein 2 (cut14) (Schizosaccharomyces pombe (strain 972 / ATCC 24843) (Fission yeast)).